The chain runs to 430 residues: MSIDIDWERATSGPDGELLAERIRSFIHDKFQQIVLPRFIRSVQVTSFNFGTIPPELEIRDLSDPFPDFYEDDDENFSDSSEEGSPTREPVDRYGNRVDSWQANSPGGPGGQMYESNQPLRMPAWEEHTGISPLRGPMNFGDINPYLFPRSGTPGIPGGTSNLGYYMPLSGLSSSQTPLGAVARGNPFSGGWPDAHGARPSRRRSEAEPDSAQSRPSTANTGNTLPSRDSMSISDPHHSHASQGMPNNQGQALEPNIPPTSPNHPLDDTPPRRMREQKAEDFQVFCRTKYAGNISLSLTAEILLDYPMPSFVGLPLKLNITGLTFDAVAVIAYIRRRIHFCFLSPEDADTLMGPETAGGGGGGDTSEPNSSRRKPSSLLREIRVESEIGRKENGKQALKNVGKLEKFVLEQVRRIFEEEFVYPSFWTFLI.

One can recognise an SMP-LTD domain in the interval 1 to 430 (MSIDIDWERA…VYPSFWTFLI (430 aa)). 3 disordered regions span residues 61–117 (DLSD…YESN), 177–276 (TPLG…RMRE), and 352–377 (MGPE…KPSS). A compositionally biased stretch (acidic residues) spans 69–82 (FYEDDDENFSDSSE). A compositionally biased stretch (basic and acidic residues) spans 85-96 (SPTREPVDRYGN). Composition is skewed to polar residues over residues 211-233 (SAQS…SMSI) and 241-251 (ASQGMPNNQGQ). A compositionally biased stretch (basic and acidic residues) spans 265 to 276 (PLDDTPPRRMRE).

It belongs to the MDM12 family. As to quaternary structure, component of the ER-mitochondria encounter structure (ERMES) or MDM complex, composed of MMM1, MDM10, MDM12 and MDM34. An MMM1 homodimer associates with one molecule of MDM12 on each side in a pairwise head-to-tail manner, and the SMP-LTD domains of MMM1 and MDM12 generate a continuous hydrophobic tunnel for phospholipid trafficking.

The protein localises to the mitochondrion outer membrane. The protein resides in the endoplasmic reticulum membrane. In terms of biological role, component of the ERMES/MDM complex, which serves as a molecular tether to connect the endoplasmic reticulum (ER) and mitochondria. Components of this complex are involved in the control of mitochondrial shape and protein biogenesis, and function in nonvesicular lipid trafficking between the ER and mitochondria. MDM12 is required for the interaction of the ER-resident membrane protein MMM1 and the outer mitochondrial membrane-resident beta-barrel protein MDM10. The MDM12-MMM1 subcomplex functions in the major beta-barrel assembly pathway that is responsible for biogenesis of all mitochondrial outer membrane beta-barrel proteins, and acts in a late step after the SAM complex. The MDM10-MDM12-MMM1 subcomplex further acts in the TOM40-specific pathway after the action of the MDM12-MMM1 complex. Essential for establishing and maintaining the structure of mitochondria and maintenance of mtDNA nucleoids. This is Mitochondrial distribution and morphology protein 12 from Ajellomyces capsulatus (strain G186AR / H82 / ATCC MYA-2454 / RMSCC 2432) (Darling's disease fungus).